Here is a 113-residue protein sequence, read N- to C-terminus: MSQEIYDYANQLERAVRALPEYQKVLEVKEAIQADASASQLFDEFVAMQEKIQGMMQSGQMPTAEEQTSIQELSQKIEANDQLKAYFEAQQALSVYMSDIERIVFAPLKDLVK.

Belongs to the UPF0342 family.

The protein is UPF0342 protein spyM18_0873 of Streptococcus pyogenes serotype M18 (strain MGAS8232).